The primary structure comprises 208 residues: Small ribosomal subunit protein uS2 (208 aa).

Positions 189-208 are disordered; it reads KPDQDLPVPPEEFETKLVQS.

This sequence belongs to the universal ribosomal protein uS2 family.

The chain is Small ribosomal subunit protein uS2 (rps2) from Pyrobaculum aerophilum (strain ATCC 51768 / DSM 7523 / JCM 9630 / CIP 104966 / NBRC 100827 / IM2).